A 117-amino-acid polypeptide reads, in one-letter code: Large ribosomal subunit protein bL19 (117 aa).

The protein belongs to the bacterial ribosomal protein bL19 family.

This protein is located at the 30S-50S ribosomal subunit interface and may play a role in the structure and function of the aminoacyl-tRNA binding site. This is Large ribosomal subunit protein bL19 from Aliivibrio fischeri (strain ATCC 700601 / ES114) (Vibrio fischeri).